Reading from the N-terminus, the 453-residue chain is Ethanolamine ammonia-lyase large subunit (453 aa).

Residues 160 to 162 (RLQ) and asparagine 193 each bind substrate. Residues proline 194 and glutamine 246 each contribute to the adenosylcob(III)alamin site. A substrate-binding site is contributed by glutamate 287. An adenosylcob(III)alamin-binding site is contributed by serine 295. Residue aspartate 362 participates in substrate binding. Position 401 (methionine 401) interacts with adenosylcob(III)alamin.

The protein belongs to the EutB family. As to quaternary structure, the basic unit is a heterodimer which dimerizes to form tetramers. The heterotetramers trimerize; 6 large subunits form a core ring with 6 small subunits projecting outwards. Requires adenosylcob(III)alamin as cofactor.

It localises to the bacterial microcompartment. The enzyme catalyses ethanolamine = acetaldehyde + NH4(+). Its pathway is amine and polyamine degradation; ethanolamine degradation. Functionally, catalyzes the deamination of various vicinal amino-alcohols to oxo compounds. Allows this organism to utilize ethanolamine as the sole source of nitrogen and carbon in the presence of vitamin B12. This chain is Ethanolamine ammonia-lyase large subunit, found in Escherichia coli O157:H7.